Consider the following 588-residue polypeptide: Adenine deaminase (588 aa).

Belongs to the metallo-dependent hydrolases superfamily. Adenine deaminase family. Homodimer. Mn(2+) serves as cofactor.

It catalyses the reaction adenine + H2O + H(+) = hypoxanthine + NH4(+). This chain is Adenine deaminase, found in Escherichia fergusonii (strain ATCC 35469 / DSM 13698 / CCUG 18766 / IAM 14443 / JCM 21226 / LMG 7866 / NBRC 102419 / NCTC 12128 / CDC 0568-73).